The sequence spans 183 residues: MPTPTKGARLGGSPSHERLMLANLATSLFEHGKITTTEAKAKRLRPLAERLITKAKKGDLHNRREVMKTIRDKDVVHKLFAEIGPHFADRNGGYTRIVKAMPRRGDNAKMAVIALVTEKTVTAEAEAARGTKFAKDEKAKAEATEAKAEETTETTESTEAESTEAPAEEAKAEDTAAEKKDES.

Residues 130-150 (GTKFAKDEKAKAEATEAKAEE) show a composition bias toward basic and acidic residues. Residues 130-183 (GTKFAKDEKAKAEATEAKAEETTETTESTEAESTEAPAEEAKAEDTAAEKKDES) are disordered. Positions 151–162 (TTETTESTEAES) are enriched in acidic residues. The span at 168-183 (EEAKAEDTAAEKKDES) shows a compositional bias: basic and acidic residues.

Belongs to the bacterial ribosomal protein bL17 family. Part of the 50S ribosomal subunit. Contacts protein L32.

The sequence is that of Large ribosomal subunit protein bL17 from Saccharopolyspora erythraea (strain ATCC 11635 / DSM 40517 / JCM 4748 / NBRC 13426 / NCIMB 8594 / NRRL 2338).